Consider the following 37-residue polypeptide: Large ribosomal subunit protein bL36 (37 aa).

Belongs to the bacterial ribosomal protein bL36 family.

This is Large ribosomal subunit protein bL36 from Dictyoglomus thermophilum (strain ATCC 35947 / DSM 3960 / H-6-12).